The primary structure comprises 852 residues: Protein SEY1 (852 aa).

At 1–738 (MNGHFAAIGN…KRSAIGGITQ (738 aa)) the chain is on the cytoplasmic side. Residues 47–294 (GFNYHLISVF…IPADGLSVYA (248 aa)) enclose the GB1/RHD3-type G domain. 57–64 (GSQSTGKS) is a binding site for GTP. Residues 475 to 500 (QYKLFEKELDEVSARLRKEEMRRLAI) adopt a coiled-coil conformation. Residues 739–759 (VPLYFYVILLILGWNEILMVL) form a helical membrane-spanning segment. At 760–762 (RNP) the chain is on the lumenal side. Residues 763-783 (FLILLILVMGGGTYIAYSLNL) traverse the membrane as a helical segment. Residues 784–852 (LGPMMQMSNA…AQDISDDDDI (69 aa)) lie on the Cytoplasmic side of the membrane.

This sequence belongs to the TRAFAC class dynamin-like GTPase superfamily. GB1/RHD3 GTPase family. RHD3 subfamily.

It is found in the endoplasmic reticulum membrane. Its function is as follows. Cooperates with the reticulon proteins and tubule-shaping DP1 family proteins to generate and maintain the structure of the tubular endoplasmic reticulum network. Has GTPase activity, which is required for its function in ER organization. This chain is Protein SEY1, found in Podospora anserina (strain S / ATCC MYA-4624 / DSM 980 / FGSC 10383) (Pleurage anserina).